We begin with the raw amino-acid sequence, 109 residues long: Large ribosomal subunit protein bL19 (109 aa).

This sequence belongs to the bacterial ribosomal protein bL19 family.

This protein is located at the 30S-50S ribosomal subunit interface and may play a role in the structure and function of the aminoacyl-tRNA binding site. The protein is Large ribosomal subunit protein bL19 of Rubrobacter xylanophilus (strain DSM 9941 / JCM 11954 / NBRC 16129 / PRD-1).